The chain runs to 328 residues: UPF0285 protein Mevan_1551 (328 aa).

Belongs to the UPF0285 family.

This is UPF0285 protein Mevan_1551 from Methanococcus vannielii (strain ATCC 35089 / DSM 1224 / JCM 13029 / OCM 148 / SB).